A 192-amino-acid chain; its full sequence is Fe/S biogenesis protein NfuA (192 aa).

2 residues coordinate [4Fe-4S] cluster: Cys149 and Cys152.

It belongs to the NfuA family. As to quaternary structure, homodimer. The cofactor is [4Fe-4S] cluster.

Its function is as follows. Involved in iron-sulfur cluster biogenesis. Binds a 4Fe-4S cluster, can transfer this cluster to apoproteins, and thereby intervenes in the maturation of Fe/S proteins. Could also act as a scaffold/chaperone for damaged Fe/S proteins. This is Fe/S biogenesis protein NfuA from Aeromonas salmonicida (strain A449).